An 871-amino-acid polypeptide reads, in one-letter code: Zinc finger and BTB domain-containing protein 10 (871 aa).

Disordered regions lie at residues 1–156 and 177–228; these read MSFS…FNGR and GASL…AGEG. A compositionally biased stretch (gly residues) spans 14 to 26; it reads RGGGLVTASGGGS. The segment covering 27 to 37 has biased composition (low complexity); sequence TNNNAGGEASA. The segment covering 39 to 56 has biased composition (pro residues); the sequence is PPQPQPRQPPPPAPPALQ. Acidic residues predominate over residues 65 to 76; the sequence is EEVELEGLEPQD. The segment covering 77–103 has biased composition (low complexity); sequence LEASAGPAAGAAEEAKELLLPQDAGGP. Omega-N-methylarginine is present on Arg-126. Positions 126-135 are enriched in gly residues; that stretch reads RGGGGGGLGN. Position 210 is a phosphoserine (Ser-210). A Glycyl lysine isopeptide (Lys-Gly) (interchain with G-Cter in SUMO2) cross-link involves residue Lys-245. The region spanning 364–433 is the BTB domain; that stretch reads CDVSIVVSGK…LYSGNLVLTS (70 aa). Glycyl lysine isopeptide (Lys-Gly) (interchain with G-Cter in SUMO2) cross-links involve residues Lys-468, Lys-483, and Lys-497. Ser-565 carries the post-translational modification Phosphoserine. Residues Lys-573, Lys-672, Lys-684, Lys-696, and Lys-706 each participate in a glycyl lysine isopeptide (Lys-Gly) (interchain with G-Cter in SUMO2) cross-link. 2 consecutive C2H2-type zinc fingers follow at residues 722-744 and 750-772; these read LKCPHCSYVAKYRRTLKRHLLIH and FSCDICGKLFTRREHVKRHSLVH. The interval 812-871 is disordered; the sequence is SQPGGQEGVDQGQDTEFPRDEEYEENEVGEADEELVDDGEDQNDPSRWDESGEVCMSLDD. Over residues 830–854 the composition is skewed to acidic residues; that stretch reads RDEEYEENEVGEADEELVDDGEDQN.

Its subcellular location is the nucleus. Its function is as follows. May be involved in transcriptional regulation. This is Zinc finger and BTB domain-containing protein 10 (ZBTB10) from Homo sapiens (Human).